Reading from the N-terminus, the 403-residue chain is Casein kinase II subunit alpha-2 (403 aa).

The N-terminal stretch at 1 to 31 (MHLIFFFSYFLRRYLLLLCAILILRAPLAHS) is a signal peptide. In terms of domain architecture, Protein kinase spans 104–389 (YEVVRKVGRG…AKEAMAHPYF (286 aa)). ATP-binding positions include 110-118 (VGRGKYSEV) and Lys133. Asn182 is a glycosylation site (N-linked (GlcNAc...) asparagine). Asp221 functions as the Proton acceptor in the catalytic mechanism.

It belongs to the protein kinase superfamily. Ser/Thr protein kinase family. CK2 subfamily. Heterotetramer of two catalytic alpha subunits and two regulatory beta subunits. In terms of tissue distribution, seems to be present in all plant organs. But seems to be more expressed than CKA1.

It localises to the nucleus. The protein localises to the nucleolus. It catalyses the reaction L-seryl-[protein] + ATP = O-phospho-L-seryl-[protein] + ADP + H(+). The enzyme catalyses L-threonyl-[protein] + ATP = O-phospho-L-threonyl-[protein] + ADP + H(+). In terms of biological role, casein kinases are operationally defined by their preferential utilization of acidic proteins such as caseins as substrates. The alpha chain contains the catalytic site. The tetrameric holoenzyme CK2, composed of two alpha and two beta subunits, phosphorylates the transcription factor PIF1 after an exposure to light, resulting in a proteasome-dependent degradation of PIF1 and promotion of photomorphogenesis. CK2 phosphorylates translation initiation factors. May participate in the regulation of the initiation of translation. Acts as circadian clock component that maintains the correct period length through phosphorylation of CCA1. May act as an ectokinase that phosphorylates several extracellular proteins. The sequence is that of Casein kinase II subunit alpha-2 from Arabidopsis thaliana (Mouse-ear cress).